A 431-amino-acid polypeptide reads, in one-letter code: Trigger factor (431 aa).

The region spanning 158 to 243 is the PPIase FKBP-type domain; it reads GYLVALETWS…VIEVSEPVLL (86 aa).

This sequence belongs to the FKBP-type PPIase family. Tig subfamily.

The protein localises to the cytoplasm. The catalysed reaction is [protein]-peptidylproline (omega=180) = [protein]-peptidylproline (omega=0). Its function is as follows. Involved in protein export. Acts as a chaperone by maintaining the newly synthesized protein in an open conformation. Functions as a peptidyl-prolyl cis-trans isomerase. The sequence is that of Trigger factor from Xylella fastidiosa (strain M23).